The chain runs to 1494 residues: Methyl-CpG-binding domain protein 5 (1494 aa).

Residues 11 to 81 (DKEGGLPAIQ…KVFNFDPGAA (71 aa)) form the MBD domain. Residues 57-68 (DGTCKCGLECPL) form a required for interaction with ASXL1/2/3 region. Disordered regions lie at residues 123–152 (LVLTSPGGGTNATPVVPSRAATPRSVRNKS), 200–274 (RQRL…TPLS), 329–350 (HHKPPQGPPPPPPPSCALQKKP), 450–522 (IGRI…KDIP), 594–641 (LAGN…QSGR), 809–848 (PNPPQSRISTSSTPVIPNSIVSSYNQTSSEAGGSGPSSSI), 1154–1173 (HDGRLRNSRGARLPKNLDHG), and 1345–1375 (VNGCVPSPSDAKSISSEDDLRNPDSPSSNEL). Pro residues predominate over residues 333–343 (PQGPPPPPPPS). Composition is skewed to low complexity over residues 499 to 511 (SPRPSMPSSPSTK) and 594 to 612 (LAGNNSSSSSNSGAVAGSG). Polar residues-rich tracts occupy residues 614 to 624 (TEGHSTLNTMF) and 813 to 835 (QSRISTSSTPVIPNSIVSSYNQT). The segment covering 836-848 (SSEAGGSGPSSSI) has biased composition (low complexity). The PWWP domain maps to 1385–1409 (VGDLVWGQIKGLTSWPGKLVREDDV). Positions 1468 to 1494 (MSGTVHQIPQGDRQMRPPKPKRRKISR) are disordered. Residues 1483 to 1494 (RPPKPKRRKISR) are compositionally biased toward basic residues.

Core component of the polycomb repressive deubiquitinase (PR-DUB) complex, at least composed of BAP1, one of ASXL1, ASXL2 or (probably) ASXL3, and one of MBD5 or MBD6. Distinct combinations of ASXL and MBD proteins may preferentially bind specific histone modification marks. The PR-DUB core associates with a number of accessory proteins, including FOXK1, FOXK2, KDM1B, HCFC1 and OGT; KDM1B specifically associates with ASXL2 PR-DUB complexes. Interacts (via MBD domain) with ASXL1, ASXL2 and ASXL3 (via PHD domain); the interaction is probably direct, mediates association with other PR-DUB complex core components. As to expression, detected in heart, placenta, liver, skeletal muscle, kidney and pancreas.

It is found in the nucleus. Its subcellular location is the chromosome. Non-catalytic component of the polycomb repressive deubiquitinase (PR-DUB) complex, a complex that specifically mediates deubiquitination of histone H2A monoubiquitinated at 'Lys-120' (H2AK119ub1). Important for stability of PR-DUB components and stimulating its ubiquitinase activity. As part of the PR-DUB complex, associates with chromatin enriched in histone marks H3K4me1, H3K4me3, and H3K27Ac, but not in H3K27me3. The PR-DUB complex is an epigenetic regulator of gene expression, including genes involved in cell growth and survivability. MBD5 and MBD6 containing complexes associate with distinct chromatin regions enriched in genes involved in different pathways. Heterochromatin recruitment is not mediated by DNA methylation. The PR-DUB complex is an epigenetic regulator of gene expression, including genes involved in development, cell communication, signaling, cell proliferation and cell viability. In Homo sapiens (Human), this protein is Methyl-CpG-binding domain protein 5 (MBD5).